Consider the following 255-residue polypeptide: Microfibril-associated glycoprotein 4 (255 aa).

Residues 1-21 form the signal peptide; that stretch reads MKALLALPLLLLLSTPPCAPQ. The Cell attachment site motif lies at 26 to 28; sequence RGD. The 224-residue stretch at 32-255 folds into the Fibrinogen C-terminal domain; it reads RFCLQQPLDC…KRTEMKIRRA (224 aa). 2 N-linked (GlcNAc...) asparagine glycosylation sites follow: asparagine 87 and asparagine 137.

Homodimer. Can also form higher oligomers. Interacts with FBN1, FBN2 and LOX. Interacts with COL1A1 in a Ca (2+)-dependent manner. Interacts with ELN in a Ca (2+)-dependent manner; this interaction promotes ELN self-assembly.

It is found in the secreted. It localises to the extracellular space. The protein resides in the extracellular matrix. Its function is as follows. Could be involved in calcium-dependent cell adhesion or intercellular interactions. May contribute to the elastic fiber assembly and/or maintenance. The protein is Microfibril-associated glycoprotein 4 (MFAP4) of Homo sapiens (Human).